The chain runs to 103 residues: 4-amino-4-deoxychorismate mutase (103 aa).

The Chorismate mutase domain maps to 1–92 (MTEQNELQRL…EMCRVEDLVM (92 aa)).

It catalyses the reaction 4-amino-4-deoxychorismate = 4-amino-4-deoxyprephenate. The protein operates within antibiotic biosynthesis. Its function is as follows. Involved in chloramphenicol biosynthesis. Probably catalyzes the conversion of 4-amino-4-deoxychorismate to 4-amino-4-deoxyprephenate. This Streptomyces venezuelae (strain ATCC 10712 / CBS 650.69 / DSM 40230 / JCM 4526 / NBRC 13096 / PD 04745) protein is 4-amino-4-deoxychorismate mutase.